A 492-amino-acid chain; its full sequence is Anthranilate synthase component 1 (492 aa).

L-tryptophan is bound by residues Ser-48 and 273–275; that span reads PYM. Chorismate is bound at residue 308-309; it reads GT. Glu-335 provides a ligand contact to Mg(2+). Chorismate contacts are provided by residues Tyr-423, Arg-443, 457–459, and Gly-459; that span reads GGG. Position 472 (Glu-472) interacts with Mg(2+).

Belongs to the anthranilate synthase component I family. In terms of assembly, heterotetramer consisting of two non-identical subunits: a beta subunit (TrpG) and a large alpha subunit (TrpE). It depends on Mg(2+) as a cofactor.

It carries out the reaction chorismate + L-glutamine = anthranilate + pyruvate + L-glutamate + H(+). The protein operates within amino-acid biosynthesis; L-tryptophan biosynthesis; L-tryptophan from chorismate: step 1/5. Its activity is regulated as follows. Feedback inhibited by tryptophan. Its function is as follows. Part of a heterotetrameric complex that catalyzes the two-step biosynthesis of anthranilate, an intermediate in the biosynthesis of L-tryptophan. In the first step, the glutamine-binding beta subunit (TrpG) of anthranilate synthase (AS) provides the glutamine amidotransferase activity which generates ammonia as a substrate that, along with chorismate, is used in the second step, catalyzed by the large alpha subunit of AS (TrpE) to produce anthranilate. In the absence of TrpG, TrpE can synthesize anthranilate directly from chorismate and high concentrations of ammonia. This Pseudomonas aeruginosa (strain ATCC 15692 / DSM 22644 / CIP 104116 / JCM 14847 / LMG 12228 / 1C / PRS 101 / PAO1) protein is Anthranilate synthase component 1.